We begin with the raw amino-acid sequence, 166 residues long: Lymphocyte antigen 6G6e (166 aa).

The signal sequence occupies residues 1–18 (MGPSSAFLGVLFLSGTLG). One can recognise a UPAR/Ly6 domain in the interval 28-151 (LRCYTCSFAK…PPPNLPLMTL (124 aa)). Intrachain disulfides connect C30/C52, C33/C39, C110/C129, and C130/C135.

In terms of assembly, interacts with CHRNA4. Post-translationally, O-glycosylated. Contains sialic acid residues.

The protein resides in the cell surface. It is found in the cell membrane. Its subcellular location is the cell projection. In terms of biological role, believed to act as a modulator of nicotinic acetylcholine receptors (nAChRs) activity. In vitro potentiates alpha-3:beta-4-containing nAChRs maximum response by increasing peak current and slowing down receptor desensitization; the activity is dependent on its cell surface localization. This is Lymphocyte antigen 6G6e (Ly6g6e) from Mus musculus (Mouse).